A 217-amino-acid chain; its full sequence is GrpE protein homolog 1, mitochondrial (217 aa).

A mitochondrion-targeting transit peptide spans 1–27 (MAARCVRLARRSLPALALSFRPSPRLL). The residue at position 94 (Lys94) is an N6-acetyllysine; alternate. Lys94 is subject to N6-succinyllysine; alternate. At Lys100 the chain carries N6-acetyllysine. Lys120 is subject to N6-succinyllysine. The residue at position 215 (Lys215) is an N6-acetyllysine; alternate. N6-succinyllysine; alternate is present on Lys215.

It belongs to the GrpE family. As to quaternary structure, probable component of the PAM complex at least composed of a mitochondrial HSP70 protein, GRPEL1 or GRPEL2, TIMM44, TIMM16/PAM16 and TIMM14/DNAJC19. Binds to HSP70, HSC70 and HSJ1B. Ubiquitous. Particularly abundant in heart, kidney and liver.

The protein localises to the mitochondrion matrix. Essential component of the PAM complex, a complex required for the translocation of transit peptide-containing proteins from the inner membrane into the mitochondrial matrix in an ATP-dependent manner. Seems to control the nucleotide-dependent binding of mitochondrial HSP70 to substrate proteins. This Rattus norvegicus (Rat) protein is GrpE protein homolog 1, mitochondrial (Grpel1).